The sequence spans 390 residues: Homoserine O-succinyltransferase (390 aa).

Positions 59-369 constitute an AB hydrolase-1 domain; the sequence is NAVLVCHALN…PHGHDAFLLD (311 aa). S165 functions as the Nucleophile in the catalytic mechanism. R235 provides a ligand contact to substrate. Catalysis depends on residues D330 and H363. D364 provides a ligand contact to substrate.

Belongs to the AB hydrolase superfamily. MetX family. In terms of assembly, homodimer.

The protein localises to the cytoplasm. It catalyses the reaction L-homoserine + succinyl-CoA = O-succinyl-L-homoserine + CoA. The protein operates within amino-acid biosynthesis; L-methionine biosynthesis via de novo pathway; O-succinyl-L-homoserine from L-homoserine: step 1/1. Functionally, transfers a succinyl group from succinyl-CoA to L-homoserine, forming succinyl-L-homoserine. The chain is Homoserine O-succinyltransferase from Cupriavidus metallidurans (strain ATCC 43123 / DSM 2839 / NBRC 102507 / CH34) (Ralstonia metallidurans).